A 118-amino-acid chain; its full sequence is V-type proton ATPase subunit G 1 (118 aa).

Position 2 is an N-acetylalanine (Ala-2). Residues 55–90 (FQSKQQAAMGSQGNLSAEVEQATRRQVQGMQSSQQR) are disordered. 2 stretches are compositionally biased toward polar residues: residues 56 to 69 (QSKQ…QGNL) and 78 to 89 (RRQVQGMQSSQQ).

Belongs to the V-ATPase G subunit family. V-ATPase is a heteromultimeric enzyme made up of two complexes: the ATP-hydrolytic V1 complex and the proton translocation V0 complex. The V1 complex consists of three catalytic AB heterodimers that form a heterohexamer, three peripheral stalks each consisting of EG heterodimers, one central rotor including subunits D and F, and the regulatory subunits C and H. The proton translocation complex V0 consists of the proton transport subunit a, a ring of proteolipid subunits c9c'', rotary subunit d, subunits e and f, and the accessory subunits ATP6AP1/Ac45 and ATP6AP2/PRR.

The protein localises to the apical cell membrane. Functionally, subunit of the V1 complex of vacuolar(H+)-ATPase (V-ATPase), a multisubunit enzyme composed of a peripheral complex (V1) that hydrolyzes ATP and a membrane integral complex (V0) that translocates protons. V-ATPase is responsible for acidifying and maintaining the pH of intracellular compartments and in some cell types, is targeted to the plasma membrane, where it is responsible for acidifying the extracellular environment. In aerobic conditions, involved in intracellular iron homeostasis, thus triggering the activity of Fe(2+) prolyl hydroxylase (PHD) enzymes, and leading to HIF1A hydroxylation and subsequent proteasomal degradation. The chain is V-type proton ATPase subunit G 1 (ATP6V1G1) from Canis lupus familiaris (Dog).